Here is a 2067-residue protein sequence, read N- to C-terminus: Lipoxygenase homology domain-containing protein 1 (2067 aa).

15 consecutive PLAT domains span residues 43–160 (RVYE…RDLL), 172–287 (NKYE…RDIL), 296–412 (ITYI…RQLY), 425–540 (FPWS…REMT), 553–673 (ARYH…RELL), 684–803 (FRYH…VELY), 814–934 (VHYE…RELL), 969–1087 (TTFS…RDLF), 1100–1225 (VPYE…RELV), 1254–1372 (VLYS…RLFY), 1421–1539 (IPYY…RVFD), 1552–1667 (VLYE…CEMC), 1679–1797 (TSYT…RDFA), 1810–1931 (TTYE…VFEV), and 1948–2064 (VKYE…RDLF).

Its subcellular location is the cell projection. The protein localises to the stereocilium. Functionally, involved in hearing. Required for normal function of hair cells in the inner ear. The sequence is that of Lipoxygenase homology domain-containing protein 1 (LOXHD1) from Homo sapiens (Human).